Consider the following 340-residue polypeptide: Replication factor C subunit 3 (340 aa).

Ser2 carries the N-acetylserine modification. Residues 16 to 19 (VEKY), Arg20, Tyr28, 53 to 61 (GPPGTGKTS), Asn148, and Arg206 each bind ATP.

Belongs to the activator 1 small subunits family. As to quaternary structure, replication factor C (RFC) is a heteropentamer of subunits RFC1, RFC2, RFC3, RFC4 and RFC5 and forms a complex with POL30/PCNA in the presence of ATP. Component of the RAD24-RFC complex which consists of RAD14, RFC2, RFC3, RFC4 and RFC5 and associates with the checkpoint clamp DDC1:MEC3:RAD17 complex. Component of the ELG1-RFC complex which consists of ELG1, RFC2, RFC3, RFC4 and RFC5. Component of the CTF18-RFC complex, which consists of CTF18, CTF8, DCC1, RFC2, RFC3, RFC4 and RFC5. RFC3 interacts with ECO1 and POL30/PCNA.

It localises to the nucleus. Its function is as follows. Component of ATP-dependent clamp loader (RFC and RFC-like) complexes for DNA clamps, such as the POL30/PCNA homotrimer and the checkpoint clamp DDC1:MEC3:RAD17 complex. During a clamp loading circle, the RFC:clamp complex binds to DNA and the recognition of the double-stranded/single-stranded junction stimulates ATP hydrolysis by RFC. The complex presumably provides bipartite ATP sites in which one subunit supplies a catalytic site for hydrolysis of ATP bound to the neighboring subunit. Dissociation of RFC from the clamp leaves the clamp encircling DNA. Component of the replication factor C (RFC or activator 1) complex which loads POL30/PCNA and acts during elongation of primed DNA templates by DNA polymerase delta and epsilon. RFC has an essential but redundant activity in sister chromatid cohesion establishment. Component of the RFC-like complex CTF18-RFC which is required for efficient establishment of chromosome cohesion during S-phase and may load or unload POL30/PCNA. Component of the RFC-like RAD24-RFC complex which loads the checkpoint clamp DDC1:MEC3:RAD17 complex and is involved in DNA repair pathways. Component of the RFC-like ELG1-RFC complex which appears to have a role in DNA replication, replication fork re-start, recombination and repair. RFC3 supplies a catalytic site to the ATP site of RFC4. The chain is Replication factor C subunit 3 (RFC3) from Saccharomyces cerevisiae (strain ATCC 204508 / S288c) (Baker's yeast).